The primary structure comprises 635 residues: Sodium- and chloride-dependent creatine transporter 1 (635 aa).

The tract at residues 1-35 (MAKKSAENGIYSVSGDEKKGPLIAPGPDGAPAKGD) is disordered. Residues 1 to 60 (MAKKSAENGIYSVSGDEKKGPLIAPGPDGAPAKGDGPAGLGAPGGCLAVPPRETWTRQMD) are Cytoplasmic-facing. Residues 25 to 35 (PGPDGAPAKGD) are compositionally biased toward low complexity. Residues 61-81 (FIMSCVGFAVGLGNVWRFPYL) traverse the membrane as a helical segment. Topologically, residues 82-87 (CYKNGG) are extracellular. Residues 88–108 (GVFLIPYVLIALVGGIPIFFL) traverse the membrane as a helical segment. Over 109–138 (EISLGQFMKAGSINVWNICPLFKGLGYASM) the chain is Cytoplasmic. A helical membrane pass occupies residues 139–159 (VIVFYCNTYYIMVLAWGFYYL). The Extracellular portion of the chain corresponds to 160-230 (VKSFTTTLPW…LSGGLEVPGA (71 aa)). N-linked (GlcNAc...) asparagine glycosylation is found at N192 and N197. A helical transmembrane segment spans residues 231–251 (LNSEVTLCLLACWVLVYFCVW). Topologically, residues 252–269 (KGVKSTGKIVYFTATFPY) are cytoplasmic. A helical transmembrane segment spans residues 270–290 (VVLVVLLVRGVLLPGALDGII). Residues 291–304 (YYLKPDWSKLRSPQ) are Extracellular-facing. The chain crosses the membrane as a helical span at residues 305–325 (VWIDAGTQIFFSYAIGLGALT). The Cytoplasmic portion of the chain corresponds to 326–341 (ALGSYNRFNNNCYKDA). A helical transmembrane segment spans residues 342–362 (IILALINSGTSFFAGFVVFSI). The Extracellular segment spans residues 363–394 (LGFMATEQGVHISKVAESGPGLAFIAYPRAVT). The chain crosses the membrane as a helical span at residues 395–415 (LMPVAPLWAALFFFMLLLLGL). The Cytoplasmic portion of the chain corresponds to 416-444 (DSQFVGVEGFITGLLDLLPASYYFRFQRE). A helical transmembrane segment spans residues 445–465 (ISVALCCALCFVIDLSMVQMA). Residues 466–479 (GMYVFQLFDYYSAS) lie on the Extracellular side of the membrane. Residues 480-500 (GTTLLWQAFWECVAVAWVYGA) form a helical membrane-spanning segment. Residues 501–520 (DRFMDDIACMIGYRPCPWMK) lie on the Cytoplasmic side of the membrane. The chain crosses the membrane as a helical span at residues 521 to 541 (WCWSFFTPLVCMGIFIFNIVY). Residues 542–560 (YKPLVYNKTYVYPWWGEAM) are Extracellular-facing. N-linked (GlcNAc...) asparagine glycosylation occurs at N548. The helical transmembrane segment at 561 to 581 (GWAFALSSMLCVPLHLLGCLL) threads the bilayer. Residues 582–635 (RAKGTMAERWQHLTQPVWGLHHLEYRAQDADVRGLTTLTPVSESSKVVVVESVM) are Cytoplasmic-facing. Residues T617 and T620 each carry the phosphothreonine modification. At S623 the chain carries Phosphoserine.

Belongs to the sodium:neurotransmitter symporter (SNF) (TC 2.A.22) family. SLC6A8 subfamily. In terms of processing, glycosylated. Prominent in kidney, heart, and muscle, also present in brain, but not in liver and intestine.

The protein localises to the cell membrane. It localises to the apical cell membrane. The enzyme catalyses creatine(out) + chloride(out) + 2 Na(+)(out) = creatine(in) + chloride(in) + 2 Na(+)(in). Its function is as follows. Creatine:sodium symporter which mediates the uptake of creatine. Plays an important role in supplying creatine to the brain via the blood-brain barrier. In Oryctolagus cuniculus (Rabbit), this protein is Sodium- and chloride-dependent creatine transporter 1 (SLC6A8).